The following is a 188-amino-acid chain: Adenine phosphoribosyltransferase (188 aa).

This sequence belongs to the purine/pyrimidine phosphoribosyltransferase family. Homodimer.

Its subcellular location is the cytoplasm. The catalysed reaction is AMP + diphosphate = 5-phospho-alpha-D-ribose 1-diphosphate + adenine. It participates in purine metabolism; AMP biosynthesis via salvage pathway; AMP from adenine: step 1/1. Its function is as follows. Catalyzes a salvage reaction resulting in the formation of AMP, that is energically less costly than de novo synthesis. In Neisseria meningitidis serogroup B (strain ATCC BAA-335 / MC58), this protein is Adenine phosphoribosyltransferase.